A 991-amino-acid polypeptide reads, in one-letter code: Translation initiation factor IF-2 (991 aa).

3 disordered regions span residues 53–85, 97–175, and 312–395; these read SHGT…KART, VKRD…EAAE, and GIKG…DRGG. 2 stretches are compositionally biased toward basic and acidic residues: residues 97–113 and 125–175; these read VKRD…HDSQ and ELQR…EAAE. Positions 323-338 are enriched in low complexity; the sequence is AAGAPAPGAAPGAAAK. Residues 339-349 are compositionally biased toward basic and acidic residues; the sequence is PGEKKSVKSEK. The tr-type G domain maps to 491 to 658; it reads PRPPVVTVMG…QVLLQAEVLE (168 aa). Residues 500–507 form a G1 region; sequence GHVDHGKT. 500 to 507 serves as a coordination point for GTP; sequence GHVDHGKT. The interval 525–529 is G2; it reads GITQH. The interval 546–549 is G3; sequence DTPG. Residues 546–550 and 600–603 contribute to the GTP site; these read DTPGH and NKID. The segment at 600–603 is G4; the sequence is NKID. The segment at 636 to 638 is G5; it reads SAK.

This sequence belongs to the TRAFAC class translation factor GTPase superfamily. Classic translation factor GTPase family. IF-2 subfamily.

The protein localises to the cytoplasm. Its function is as follows. One of the essential components for the initiation of protein synthesis. Protects formylmethionyl-tRNA from spontaneous hydrolysis and promotes its binding to the 30S ribosomal subunits. Also involved in the hydrolysis of GTP during the formation of the 70S ribosomal complex. The polypeptide is Translation initiation factor IF-2 (Leptothrix cholodnii (strain ATCC 51168 / LMG 8142 / SP-6) (Leptothrix discophora (strain SP-6))).